The sequence spans 149 residues: Endoribonuclease YbeY (149 aa).

Zn(2+) is bound by residues H116, H120, and H126.

Belongs to the endoribonuclease YbeY family. It depends on Zn(2+) as a cofactor.

The protein localises to the cytoplasm. Single strand-specific metallo-endoribonuclease involved in late-stage 70S ribosome quality control and in maturation of the 3' terminus of the 16S rRNA. The protein is Endoribonuclease YbeY of Nocardioides sp. (strain ATCC BAA-499 / JS614).